A 664-amino-acid polypeptide reads, in one-letter code: Peroxisomal acyl-coenzyme A oxidase 1 (664 aa).

10 residues coordinate FAD: Y135, Q137, T138, S144, G177, R310, Q330, R333, G401, and T422. E424 serves as the catalytic Proton acceptor. D426 lines the FAD pocket. The cysteines at positions 467 and 576 are disulfide-linked. Positions 662-664 (ARL) match the Microbody targeting signal motif.

This sequence belongs to the acyl-CoA oxidase family. Homodimer. FAD is required as a cofactor. Expressed mainly in flowers and young seedlings. Lower expression in roots, leaves and bracts.

Its subcellular location is the peroxisome. It carries out the reaction a 2,3-saturated acyl-CoA + O2 = a (2E)-enoyl-CoA + H2O2. Functionally, catalyzes the desaturation of both long- and medium-chain acyl-CoAs to 2-trans-enoyl-CoAs. Most active with C14-CoA. Activity on long-chain mono-unsaturated substrates is 40% higher than with the corresponding saturated substrates. Seems to be an important factor in the general metabolism of root tips. May be involved in the biosynthesis of jasmonic acid. The polypeptide is Peroxisomal acyl-coenzyme A oxidase 1 (Arabidopsis thaliana (Mouse-ear cress)).